Consider the following 334-residue polypeptide: Protein U17/U16 (334 aa).

It belongs to the herpesviridae US22 family. Post-translationally, isoform 1 is not glycosylated.

Functionally, isoform 3 can transactivate the human immunodeficiency virus type 1 promoter. In Homo sapiens (Human), this protein is Protein U17/U16 (U17/U16).